A 305-amino-acid polypeptide reads, in one-letter code: UDP-3-O-acyl-N-acetylglucosamine deacetylase (305 aa).

The Zn(2+) site is built by H79, H238, and D242. The Proton donor role is filled by H265.

This sequence belongs to the LpxC family. Zn(2+) is required as a cofactor.

It carries out the reaction a UDP-3-O-[(3R)-3-hydroxyacyl]-N-acetyl-alpha-D-glucosamine + H2O = a UDP-3-O-[(3R)-3-hydroxyacyl]-alpha-D-glucosamine + acetate. Its pathway is glycolipid biosynthesis; lipid IV(A) biosynthesis; lipid IV(A) from (3R)-3-hydroxytetradecanoyl-[acyl-carrier-protein] and UDP-N-acetyl-alpha-D-glucosamine: step 2/6. Functionally, catalyzes the hydrolysis of UDP-3-O-myristoyl-N-acetylglucosamine to form UDP-3-O-myristoylglucosamine and acetate, the committed step in lipid A biosynthesis. The chain is UDP-3-O-acyl-N-acetylglucosamine deacetylase from Pectobacterium atrosepticum (strain SCRI 1043 / ATCC BAA-672) (Erwinia carotovora subsp. atroseptica).